The following is a 585-amino-acid chain: Epithelial sodium channel subunit gamma (585 aa).

Residues 1–55 (MAPGEKIKAKIKKNLPVTGPQAPTIKELMRWYCLNTNTHGCRRIVVSRGRLRRLL) are Cytoplasmic-facing. Residues 56–76 (WIGFTLTAVALILWQCALLVF) form a helical membrane-spanning segment. Residues 77–477 (SFYTVSVSIK…GGQLGLWMSC (401 aa)) are Extracellular-facing. 6 disulfides stabilise this stretch: Cys-100–Cys-219, Cys-308–Cys-393, Cys-330–Cys-389, Cys-334–Cys-385, Cys-343–Cys-370, and Cys-345–Cys-359. Asn-207 is a glycosylation site (N-linked (GlcNAc...) asparagine). Residue Asn-433 is glycosylated (N-linked (GlcNAc...) asparagine). Residues 478-498 (SVVCVIEIIEVFFIDFFSIIA) form a helical membrane-spanning segment. Residues 499–585 (RRQWQKAKEW…LTDTQMLDEL (87 aa)) lie on the Cytoplasmic side of the membrane. The tract at residues 513–534 (QAPPCPEAPRSPQGQDNPALDI) is disordered. Positions 559-563 (PPPKY) match the PY motif; recruits WW domain-containing proteins and is thereby required for ubiquitination and inhibition of the channel by NEDD4 and NEDD4L motif.

Belongs to the amiloride-sensitive sodium channel (TC 1.A.6) family. SCNN1G subfamily. In terms of assembly, component of the heterotrimeric epithelial sodium channel (ENaC) composed of an alpha/SCNN1A, a beta/SCNN1B and a gamma/SCNN1G subunit. An additional delta/SCNN1D subunit can replace the alpha/SCNN1A subunit to form an alternative channel with specific properties. Interacts with WWP1 (via WW domains). Interacts with WWP2 (via WW domains); inhibits the channel. Interacts with the full-length immature form of PCSK9 (pro-PCSK9); inhibits ENaC by promoting its proteasomal degradation. Interacts with BPIFA1; the interaction is indirect via SCNN1B and inhibits the proteolytic maturation of SCNN1A and SCNN1G and the activation of ENaC. In terms of processing, phosphorylated on serine and threonine residues. Aldosterone and insulin increase the basal level of phosphorylation. Ubiquitinated. Can be ubiquitinated at multiple sites and undergo monoubiquitination and polyubiquitination. Ubiquitination by NEDD4 or NEDD4L inhibits the ENaC channel through endocytosis, intracellular retention and degradation of its individual subunits. Post-translationally, ENaC is activated through the proteolytic maturation of its subunits. Furin cleaves the SCNN1G subunit first, followed by cleavage by prostasin (PRSS8), which results in a stepwise increase in the open probability of the channel due to the release of an inhibitory tract. BPIFA1, which is recruited by the SCNN1B subunit, prevents the proteolytic activation of ENaC. In terms of processing, N-glycosylated. N-linked glycans are processed to complex type during ENaC complex assembly and transport to the plasma membrane.

The protein localises to the apical cell membrane. It catalyses the reaction Na(+)(in) = Na(+)(out). With respect to regulation, originally identified and characterized by its inhibition by the diuretic drug amiloride. This is one of the three pore-forming subunits of the heterotrimeric epithelial sodium channel (ENaC), a critical regulator of sodium balance and fluid homeostasis. ENaC operates in epithelial tissues, where it mediates the electrodiffusion of sodium ions from extracellular fluid through the apical membrane of cells, with water following osmotically. It plays a key role in maintaining sodium homeostasis through electrogenic sodium reabsorption in the kidneys. Additionally, ENaC is essential for airway surface liquid homeostasis, which is crucial for proper mucus clearance. The polypeptide is Epithelial sodium channel subunit gamma (Pan troglodytes (Chimpanzee)).